Consider the following 209-residue polypeptide: Small ribosomal subunit protein uS4 (209 aa).

An S4 RNA-binding domain is found at 98–161 (TRLDNVVYRM…AKQLRVQEAL (64 aa)).

This sequence belongs to the universal ribosomal protein uS4 family. Part of the 30S ribosomal subunit. Contacts protein S5. The interaction surface between S4 and S5 is involved in control of translational fidelity.

In terms of biological role, one of the primary rRNA binding proteins, it binds directly to 16S rRNA where it nucleates assembly of the body of the 30S subunit. Functionally, with S5 and S12 plays an important role in translational accuracy. In Stenotrophomonas maltophilia (strain R551-3), this protein is Small ribosomal subunit protein uS4.